A 354-amino-acid chain; its full sequence is Guanine nucleotide-binding protein subunit alpha-14 (354 aa).

Positions 33-354 (RELKLLLLGT…QLNLREFNLV (322 aa)) constitute a G-alpha domain. A G1 motif region spans residues 36 to 49 (KLLLLGTGESGKST). GTP is bound by residues 41 to 48 (GTGESGKS), 175 to 181 (LRVRVPT), 200 to 204 (DVGGQ), 269 to 272 (NKKD), and Ala-326. Residues Ser-48 and Thr-181 each contribute to the Mg(2+) site. A G2 motif region spans residues 173-181 (DVLRVRVPT). Residues 196–205 (FRMVDVGGQR) are G3 motif. Positions 265 to 272 (ILFLNKKD) are G4 motif. The tract at residues 324–329 (TCATDT) is G5 motif.

The protein belongs to the G-alpha family. G(q) subfamily. G proteins are composed of 3 units; alpha, beta and gamma. The alpha chain contains the guanine nucleotide binding site.

Functionally, guanine nucleotide-binding proteins (G proteins) are involved as modulators or transducers in various transmembrane signaling systems. Acts as an activator of phospholipase C. Mediates responses to trypsin. This Xenopus laevis (African clawed frog) protein is Guanine nucleotide-binding protein subunit alpha-14 (gna14).